We begin with the raw amino-acid sequence, 129 residues long: Trefoil factor 2 (129 aa).

Positions M1–S23 are cleaved as a signal peptide. 2 consecutive P-type domains span residues C29 to L73 and D79 to K122. 7 disulfides stabilise this stretch: C29–C127, C31–C58, C42–C57, C52–C69, C81–C107, C91–C106, and C101–C118.

As to expression, stomach.

It is found in the secreted. Its function is as follows. Inhibits gastrointestinal motility and gastric acid secretion. Could function as a structural component of gastric mucus, possibly by stabilizing glycoproteins in the mucus gel through interactions with carbohydrate side chains. The polypeptide is Trefoil factor 2 (TFF2) (Homo sapiens (Human)).